Reading from the N-terminus, the 4043-residue chain is Polyketide synthase-nonribosomal peptide synthetase (4043 aa).

Residues 8–446 (SEPIAIIGTG…GANSHAILES (439 aa)) form the Ketosynthase family 3 (KS3) domain. Active-site for beta-ketoacyl synthase activity residues include Cys-181, His-320, and His-366. The segment at 557–877 (VFTGQGAQWA…SRGNSDVEAF (321 aa)) is acyl transferase. Residues 944-1078 (NELLGRQVLD…CRLRITVGDS (135 aa)) are N-terminal hotdog fold. Residues 944–1246 (NELLGRQVLD…TQPLSSPTEA (303 aa)) form the PKS/mFAS DH domain. The dehydratase (DH) domain stretch occupies residues 945–1243 (ELLGRQVLDG…GLQTQPLSSP (299 aa)). The active-site Proton acceptor; for dehydratase activity is His-976. The interval 1093–1246 (LLEVESDRFY…TQPLSSPTEA (154 aa)) is C-terminal hotdog fold. Asp-1154 functions as the Proton donor; for dehydratase activity in the catalytic mechanism. The methyltransferase (MT) domain stretch occupies residues 1400–1585 (RYTKYLAAMA…GIETAIPHHD (186 aa)). Positions 2115–2288 (TYWLVGLTGG…NASAVHIGAI (174 aa)) are ketoreductase (KR)domain. The Carrier 1 domain occupies 2394-2475 (SSSADIYDII…EMVTQAQELL (82 aa)). Residues 2395–2472 (SSADIYDIIS…TVGEMVTQAQ (78 aa)) form a peptidyl carrier protein region. Ser-2435 is subject to O-(pantetheine 4'-phosphoryl)serine. 2 disordered regions span residues 2476-2575 (PKEL…DPSR) and 2587-2630 (EKHL…SQII). Polar residues-rich tracts occupy residues 2494-2512 (PKNT…QLQN) and 2520-2534 (ALSQ…NMIK). Residues 2537–2550 (PPKEAEAKQPRPEV) are compositionally biased toward basic and acidic residues. Positions 2617-2627 (TSSSSSSTSAS) are enriched in low complexity. A condensation region spans residues 2640-3069 (KSVPMAFGQS…NPALRLNVPP (430 aa)). Residues 3102-3502 (EIVERYPTHV…EGNLILGGRI (401 aa)) form an adenylation region. One can recognise a Carrier 2 domain in the interval 3617–3697 (TDESPSMAKM…GMVSLIDHSE (81 aa)). The interval 3622 to 3694 (SMAKMRDVWA…SLTGMVSLID (73 aa)) is thiolation. Ser-3657 carries the O-(pantetheine 4'-phosphoryl)serine modification. The segment at 3735–3954 (LTGATGFLGR…DFVSADRVAM (220 aa)) is reductase-like.

The protein in the C-terminal section; belongs to the NRP synthetase family.

Its pathway is mycotoxin biosynthesis. Hybrid PKS-NRPS synthetase; part of the gene cluster that mediates the biosynthesis of the mycotoxins cytochalasins E and K. The hybrid PKS-NRPS synthetase ccsA and the enoyl reductase ccsC are responsible for fusion of phenylalanine with an octaketide backbone and subsequent release of the stable tetramic acid precursor. The polyketide synthase module (PKS) of the PKS-NRPS ccsA is responsible for the synthesis of the octaketide backbone. The downstream nonribosomal peptide synthetase (NRPS) amidates the carboxyl end of the octaketide with a phenylalanine. A reductase-like domain (R) at the C-terminus catalyzes the reductive release of the polyketide-amino acid intermediate. Because ccsA lacks a designated enoylreductase (ER) domain, the required activity is provided the enoyl reductase ccsC. Upon formation of the 11-membered carbocycle-fused perhydroisoindolone intermediate, a number of oxidative steps are required to afford the final cytochalasin E and K, including two hydroxylations at C17 and C18, one alcohol oxidation at C17, one epoxidation at C6 and C7 and two Baeyer-Villiger oxidations. The oxidative modification at C17, C18 and the C6-C7 epoxidation are likely to be catalyzed by the two cytochrome P450 oxygenases ccsD and ccsG. CcsD may be responsible for the epoxidation of the C6-C7 double bond. CcsG may be responsible for the successive oxidative modifications at C17 and C18. The double Baeyer-Villiger oxidations of ketocytochalasin to precytochalasin and cytochalasin Z(16) are among the final steps leading to cytochalasin E and K and are catalyzed by ccsB. The first oxygen insertion step follows that of the classic BVMO mechanism, generating the ester precytochalasin. Release of precytochalasin into an aqueous environment can generate the shunt product iso-precytochalasin through spontaneous isomerization. Alternatively, precytochalasin can undergo further oxidation by ccsB to yield the in-line carbonate-containing cytochalasin Z(16). Cytochalasin Z(16) is a precursor to cytochalasin E and cytochalasin K, whereas iso-precytochalasin is a precursor to cytochalasin Z(17) and rosellichalasin. The hydrolyase ccsE may catalyze hydrolysis of epoxide bond in cytochalasin E to afford cytochalasin K. The function of ccsF has not been assigned but it may play a role in post-PKS-NRPS biosynthetic step, resistance or transport of cytochalasins and related PKS-NRPS products. The sequence is that of Polyketide synthase-nonribosomal peptide synthetase from Aspergillus clavatus (strain ATCC 1007 / CBS 513.65 / DSM 816 / NCTC 3887 / NRRL 1 / QM 1276 / 107).